The following is a 448-amino-acid chain: ATP-dependent protease ATPase subunit HslU (448 aa).

Residues I18, G60–E65, D261, E326, and R398 each bind ATP.

This sequence belongs to the ClpX chaperone family. HslU subfamily. In terms of assembly, a double ring-shaped homohexamer of HslV is capped on each side by a ring-shaped HslU homohexamer. The assembly of the HslU/HslV complex is dependent on binding of ATP.

Its subcellular location is the cytoplasm. ATPase subunit of a proteasome-like degradation complex; this subunit has chaperone activity. The binding of ATP and its subsequent hydrolysis by HslU are essential for unfolding of protein substrates subsequently hydrolyzed by HslV. HslU recognizes the N-terminal part of its protein substrates and unfolds these before they are guided to HslV for hydrolysis. The chain is ATP-dependent protease ATPase subunit HslU from Paraburkholderia xenovorans (strain LB400).